The primary structure comprises 2297 residues: Serine/threonine-protein kinase WNK2 (2297 aa).

A compositionally biased stretch (basic and acidic residues) spans 1 to 10 (MDGDGGRRDV). Disordered stretches follow at residues 1-75 (MDGD…QRRV) and 89-183 (ARGR…EDDL). Arginine 19 and arginine 30 each carry omega-N-methylarginine. Serine 45 carries the post-translational modification Phosphoserine. The segment covering 92 to 120 (RPAAPAPAALVAQPGAPGAPADAGPEPVG) has biased composition (low complexity). Residues 142–172 (GPREEAAATVRKEDEGAAEAKPEPGRTRRDE) are compositionally biased toward basic and acidic residues. A compositionally biased stretch (acidic residues) spans 173-182 (PEEEEDDEDD). Positions 195–453 (LKFDIELGRG…IKDLLSHAFF (259 aa)) constitute a Protein kinase domain. ATP is bound by residues serine 205, 275–278 (TELM), and lysine 325. Residue aspartate 342 is the Proton acceptor of the active site. Phosphoserine; by autocatalysis occurs at positions 352 and 356. Serine 560 is subject to Phosphoserine. Disordered stretches follow at residues 579–630 (AQAG…DSQS), 699–751 (FPDP…PVVP), 917–1022 (PQMA…PGSQ), 1117–1185 (PVQE…ERAS), 1262–1297 (SEDT…SQAN), 1323–1345 (APEA…ASQG), 1374–1480 (SAQS…HEAP), and 1492–1586 (PCTP…DSTI). Over residues 604 to 625 (PTSATSLASDSTFDSGQGSTVY) the composition is skewed to polar residues. Pro residues-rich tracts occupy residues 709-740 (VLPP…PTPL) and 939-1007 (PPQP…PLQP). Serine 1150 is modified (phosphoserine). Residues 1167 to 1178 (ARKHHRRSTRAR) are compositionally biased toward basic residues. The residue at position 1262 (serine 1262) is a Phosphoserine. The span at 1392 to 1406 (SKEQPSFLASQQLLS) shows a compositional bias: polar residues. A compositionally biased stretch (pro residues) spans 1411–1426 (SNPPGAPPAPLAPSSP). Polar residues-rich tracts occupy residues 1439–1453 (ATST…TASQ) and 1461–1473 (QGLT…SQPL). Over residues 1510–1520 (EPLPPPAPEPS) the composition is skewed to pro residues. Residues 1526–1544 (PQPALGQPAPLLPAAVGAV) show a composition bias toward low complexity. The segment covering 1552 to 1565 (PSPPLGPTVPPQPP) has biased composition (pro residues). At serine 1588 the chain carries Phosphoserine. A compositionally biased stretch (basic and acidic residues) spans 1621-1631 (TLEPLRGDQPR). A disordered region spans residues 1621–1865 (TLEPLRGDQP…PVQKQASLPV (245 aa)). Positions 1675–1688 (QGTSSSMTAESSPR) are enriched in polar residues. Position 1685 is a phosphoserine (serine 1685). Basic and acidic residues predominate over residues 1721–1731 (ARVEPTDRDGG). Phosphoserine occurs at positions 1736, 1817, 1818, 1862, and 1889. 2 disordered regions span residues 1970–1990 (NVGF…SKSK) and 2011–2031 (TGHL…QASV). A compositionally biased stretch (basic residues) spans 1981-1990 (GRRRKTSKSK). Residue serine 2067 is modified to Phosphoserine. Disordered stretches follow at residues 2123-2142 (SRSS…QPAL) and 2269-2297 (CCGH…PVRS). The segment covering 2272 to 2289 (HSTQPRGGQRVGSKTASF) has biased composition (polar residues).

Belongs to the protein kinase superfamily. Ser/Thr protein kinase family. WNK subfamily. In terms of assembly, forms a complex with the phosphorylated form of STK39. Mg(2+) serves as cofactor. Post-translationally, autophosphorylated. Autophosphorylation at Ser-352 and Ser-356 promotes its activity. In terms of tissue distribution, expressed in various cancer cell lines (at protein level). Predominantly expressed in heart, brain, skeletal muscle and colon.

It is found in the cytoplasm. The protein resides in the cell membrane. It catalyses the reaction L-seryl-[protein] + ATP = O-phospho-L-seryl-[protein] + ADP + H(+). The enzyme catalyses L-threonyl-[protein] + ATP = O-phospho-L-threonyl-[protein] + ADP + H(+). Its activity is regulated as follows. Activation requires autophosphorylation of Ser-356 and, to a lower extent, Ser-352. Its function is as follows. Serine/threonine-protein kinase component of the WNK2-SPAK/OSR1 kinase cascade, which plays an important role in the regulation of electrolyte homeostasis, cell signaling, survival, and proliferation. The WNK2-SPAK/OSR1 kinase cascade is composed of WNK2, which mediates phosphorylation and activation of downstream kinases OXSR1/OSR1 and STK39/SPAK. Following activation, OXSR1/OSR1 and STK39/SPAK catalyze phosphorylation of ion cotransporters, regulating their activity. Acts as an activator and inhibitor of sodium-coupled chloride cotransporters and potassium-coupled chloride cotransporters respectively. Activates SLC12A2, SCNN1A, SCNN1B, SCNN1D and SGK1 and inhibits SLC12A5. Negatively regulates the EGF-induced activation of the ERK/MAPK-pathway and the downstream cell cycle progression. Affects MAPK3/MAPK1 activity by modulating the activity of MAP2K1 and this modulation depends on phosphorylation of MAP2K1 by PAK1. WNK2 acts by interfering with the activity of PAK1 by controlling the balance of the activity of upstream regulators of PAK1 activity, RHOA and RAC1, which display reciprocal activity. This Homo sapiens (Human) protein is Serine/threonine-protein kinase WNK2.